The chain runs to 258 residues: MLILISPAKTLDYQSPLPTTRYTLPELLDNSQQLIHEARKLTPPQISSLMRISDKLAGINAARFHDWQPDFTSENARQAILAFKGDVYTGLQAETFSEDDFDFAQQHLRMLSGLYGVLRPLDLMQPYRLEMGIRLENARGKDLYQFWGDIITNKLNEALAAQGDNVVINLASDEYFKSVKPKKLNAEIIKPVFLDEKNGKFKIISFYAKKARGLMSRFIIENRLTKPEQLTGFNSEGYFFDEASSSNGELVFKRYEQR.

It belongs to the UPF0246 family.

The chain is UPF0246 protein YaaA from Escherichia coli (strain SMS-3-5 / SECEC).